The primary structure comprises 514 residues: Putative ribose/galactose/methyl galactoside import ATP-binding protein 3 (514 aa).

ABC transporter domains are found at residues 21 to 256 (LRLD…VGRT) and 267 to 512 (VPTD…SGRS). 53–60 (GENGAGKS) contributes to the ATP binding site.

The protein belongs to the ABC transporter superfamily. Carbohydrate importer 2 (CUT2) (TC 3.A.1.2) family.

The protein resides in the cell inner membrane. The catalysed reaction is D-ribose(out) + ATP + H2O = D-ribose(in) + ADP + phosphate + H(+). The enzyme catalyses D-galactose(out) + ATP + H2O = D-galactose(in) + ADP + phosphate + H(+). In terms of biological role, part of an ABC transporter complex involved in carbohydrate import. Could be involved in ribose, galactose and/or methyl galactoside import. Responsible for energy coupling to the transport system. The protein is Putative ribose/galactose/methyl galactoside import ATP-binding protein 3 of Burkholderia cenocepacia (strain HI2424).